Here is a 223-residue protein sequence, read N- to C-terminus: Pleckstrin homology domain-containing family B member 1 (223 aa).

The region spanning 2–109 (ALVRGGWLWR…WKTALMEANS (108 aa)) is the PH domain.

Homodimer. Interacts (via PH domain) with MYO1C. Interacts (via PH domain) with MYO7A. Binds transducins. As to expression, highly expressed in photoreceptor cells, oligodendrocytes and throughout the myelinated parts of the central nervous system. Detected in brain, liver, kidney, spleen and trachea.

It is found in the membrane. Its subcellular location is the cytoplasm. The sequence is that of Pleckstrin homology domain-containing family B member 1 (Plekhb1) from Rattus norvegicus (Rat).